A 442-amino-acid polypeptide reads, in one-letter code: Proline--tRNA ligase (442 aa).

This sequence belongs to the class-II aminoacyl-tRNA synthetase family. ProS type 2 subfamily. As to quaternary structure, homodimer.

It is found in the cytoplasm. The enzyme catalyses tRNA(Pro) + L-proline + ATP = L-prolyl-tRNA(Pro) + AMP + diphosphate. Its function is as follows. Catalyzes the attachment of proline to tRNA(Pro) in a two-step reaction: proline is first activated by ATP to form Pro-AMP and then transferred to the acceptor end of tRNA(Pro). This is Proline--tRNA ligase from Mesorhizobium japonicum (strain LMG 29417 / CECT 9101 / MAFF 303099) (Mesorhizobium loti (strain MAFF 303099)).